Here is a 179-residue protein sequence, read N- to C-terminus: Large ribosomal subunit protein uL5 (179 aa).

The protein belongs to the universal ribosomal protein uL5 family. Part of the 50S ribosomal subunit; part of the 5S rRNA/L5/L18/L25 subcomplex. Contacts the 5S rRNA and the P site tRNA. Forms a bridge to the 30S subunit in the 70S ribosome.

Functionally, this is one of the proteins that bind and probably mediate the attachment of the 5S RNA into the large ribosomal subunit, where it forms part of the central protuberance. In the 70S ribosome it contacts protein S13 of the 30S subunit (bridge B1b), connecting the 2 subunits; this bridge is implicated in subunit movement. Contacts the P site tRNA; the 5S rRNA and some of its associated proteins might help stabilize positioning of ribosome-bound tRNAs. The sequence is that of Large ribosomal subunit protein uL5 from Bordetella petrii (strain ATCC BAA-461 / DSM 12804 / CCUG 43448).